The following is an 898-amino-acid chain: Alanine--tRNA ligase (898 aa).

Residues H584, H588, C686, and H690 each contribute to the Zn(2+) site.

The protein belongs to the class-II aminoacyl-tRNA synthetase family. Zn(2+) is required as a cofactor.

It is found in the cytoplasm. It carries out the reaction tRNA(Ala) + L-alanine + ATP = L-alanyl-tRNA(Ala) + AMP + diphosphate. In terms of biological role, catalyzes the attachment of alanine to tRNA(Ala) in a two-step reaction: alanine is first activated by ATP to form Ala-AMP and then transferred to the acceptor end of tRNA(Ala). Also edits incorrectly charged Ser-tRNA(Ala) and Gly-tRNA(Ala) via its editing domain. This Myxococcus xanthus (strain DK1622) protein is Alanine--tRNA ligase.